The sequence spans 225 residues: Lipoprotein CseA (225 aa).

A signal peptide spans M1–G36. A lipid anchor (N-palmitoyl cysteine) is attached at C37. The S-diacylglycerol cysteine moiety is linked to residue C37. Disordered regions lie at residues G40–R77 and T205–S225. Positions S60–K73 are enriched in low complexity.

Its subcellular location is the cell membrane. May be involved in the stabilization of the cell envelope or may interact with the sensor protein CseC to modulate its activity, in response to cell envelope stress. This chain is Lipoprotein CseA (cseA), found in Streptomyces coelicolor (strain ATCC BAA-471 / A3(2) / M145).